A 532-amino-acid polypeptide reads, in one-letter code: CTP synthase (532 aa).

An amidoligase domain region spans residues 1–269; it reads MNQASTRFIF…DTQILNHFNI (269 aa). Serine 17 lines the CTP pocket. Residue serine 17 participates in UTP binding. ATP-binding positions include 18 to 23 and aspartate 75; that span reads SLGKGL. Mg(2+) is bound by residues aspartate 75 and glutamate 143. CTP-binding positions include 150 to 152, 190 to 195, and lysine 226; these read DIE and KTKPTQ. Residues 190–195 and lysine 226 each bind UTP; that span reads KTKPTQ. Residues 294 to 532 enclose the Glutamine amidotransferase type-1 domain; it reads NVAIIGKYIK…FISFIKASLD (239 aa). Glycine 355 lines the L-glutamine pocket. The active-site Nucleophile; for glutamine hydrolysis is cysteine 382. L-glutamine-binding positions include 383-386, glutamate 406, and arginine 462; that span reads MGMQ. Residues histidine 509 and glutamate 511 contribute to the active site.

The protein belongs to the CTP synthase family. Homotetramer.

The catalysed reaction is UTP + L-glutamine + ATP + H2O = CTP + L-glutamate + ADP + phosphate + 2 H(+). It catalyses the reaction L-glutamine + H2O = L-glutamate + NH4(+). It carries out the reaction UTP + NH4(+) + ATP = CTP + ADP + phosphate + 2 H(+). Its pathway is pyrimidine metabolism; CTP biosynthesis via de novo pathway; CTP from UDP: step 2/2. With respect to regulation, allosterically activated by GTP, when glutamine is the substrate; GTP has no effect on the reaction when ammonia is the substrate. The allosteric effector GTP functions by stabilizing the protein conformation that binds the tetrahedral intermediate(s) formed during glutamine hydrolysis. Inhibited by the product CTP, via allosteric rather than competitive inhibition. Catalyzes the ATP-dependent amination of UTP to CTP with either L-glutamine or ammonia as the source of nitrogen. Regulates intracellular CTP levels through interactions with the four ribonucleotide triphosphates. In Ehrlichia chaffeensis (strain ATCC CRL-10679 / Arkansas), this protein is CTP synthase.